The sequence spans 488 residues: Probable glycine dehydrogenase (decarboxylating) subunit 2 (488 aa).

Lys-274 carries the N6-(pyridoxal phosphate)lysine modification.

The protein belongs to the GcvP family. C-terminal subunit subfamily. The glycine cleavage system is composed of four proteins: P, T, L and H. In this organism, the P 'protein' is a heterodimer of two subunits. Pyridoxal 5'-phosphate serves as cofactor.

It catalyses the reaction N(6)-[(R)-lipoyl]-L-lysyl-[glycine-cleavage complex H protein] + glycine + H(+) = N(6)-[(R)-S(8)-aminomethyldihydrolipoyl]-L-lysyl-[glycine-cleavage complex H protein] + CO2. The glycine cleavage system catalyzes the degradation of glycine. The P protein binds the alpha-amino group of glycine through its pyridoxal phosphate cofactor; CO(2) is released and the remaining methylamine moiety is then transferred to the lipoamide cofactor of the H protein. The chain is Probable glycine dehydrogenase (decarboxylating) subunit 2 from Listeria welshimeri serovar 6b (strain ATCC 35897 / DSM 20650 / CCUG 15529 / CIP 8149 / NCTC 11857 / SLCC 5334 / V8).